The chain runs to 276 residues: uncharacterized protein (276 aa).

Positions 1–25 are cleaved as a signal peptide; the sequence is MNKKRLLPKASLGALFMLFGTALTA. Cys26 is lipidated: N-palmitoyl cysteine. The S-diacylglycerol cysteine moiety is linked to residue Cys26.

This sequence belongs to the MG439/MG440 family.

The protein resides in the cell membrane. This is an uncharacterized protein from Mycoplasma pneumoniae (strain ATCC 29342 / M129 / Subtype 1) (Mycoplasmoides pneumoniae).